Here is a 169-residue protein sequence, read N- to C-terminus: MPLLDSFTVDHTRMNAPAVRVAKHMSTPKGDAITVFDLRFCTPNKEILSERGIHTLEHLFAGFMRDHLNSSNVEIIDISPMGCRTGFYMSLIGEPTEHQVAVAWLAAMEDVLKVVEQSEIPELNEYQCGTYEMHSLEQAQEIARNIIAAGVSVNRNDDLKLSDEILGKL.

Positions 54, 58, and 128 each coordinate Fe cation.

The protein belongs to the LuxS family. In terms of assembly, homodimer. It depends on Fe cation as a cofactor.

It carries out the reaction S-(5-deoxy-D-ribos-5-yl)-L-homocysteine = (S)-4,5-dihydroxypentane-2,3-dione + L-homocysteine. In terms of biological role, involved in the synthesis of autoinducer 2 (AI-2) which is secreted by bacteria and is used to communicate both the cell density and the metabolic potential of the environment. The regulation of gene expression in response to changes in cell density is called quorum sensing. Catalyzes the transformation of S-ribosylhomocysteine (RHC) to homocysteine (HC) and 4,5-dihydroxy-2,3-pentadione (DPD). The chain is S-ribosylhomocysteine lyase from Shewanella putrefaciens (strain CN-32 / ATCC BAA-453).